A 210-amino-acid chain; its full sequence is Thymidylate kinase (210 aa).

10 to 17 (GPEGAGKS) provides a ligand contact to ATP.

The protein belongs to the thymidylate kinase family.

It catalyses the reaction dTMP + ATP = dTDP + ADP. Phosphorylation of dTMP to form dTDP in both de novo and salvage pathways of dTTP synthesis. In Pseudomonas entomophila (strain L48), this protein is Thymidylate kinase.